The following is a 421-amino-acid chain: Anhydromevalonate phosphate decarboxylase (421 aa).

2 residues coordinate Mn(2+): Asn131 and Glu194. The active-site Proton acceptor is Asp240.

This sequence belongs to the UbiD family. It depends on prenylated FMN as a cofactor. The cofactor is Mn(2+).

It carries out the reaction (2E)-3-methyl-5-phosphooxypent-2-enoate + H(+) = isopentenyl phosphate + CO2. Its pathway is isoprenoid biosynthesis; isopentenyl diphosphate biosynthesis via mevalonate pathway. Catalyzes the conversion of trans-anhydromevalonate 5-phosphate (tAHMP) into isopentenyl phosphate. Involved in the archaeal mevalonate (MVA) pathway, which provides fundamental precursors for isoprenoid biosynthesis, such as isopentenyl diphosphate (IPP) and dimethylallyl diphosphate (DMAPP). The polypeptide is Anhydromevalonate phosphate decarboxylase (Methanocaldococcus jannaschii (strain ATCC 43067 / DSM 2661 / JAL-1 / JCM 10045 / NBRC 100440) (Methanococcus jannaschii)).